The chain runs to 247 residues: MERVGTPEEERQAGPVLPTSLESDSSKRTSWGFLITGVVGGALLTVYAVATPFITPALRKVCLPFVPATSKQVENVVRMLRHRRGPLVDIGSGDGRIVIAAAKEGFPAVGYELNPWLVWYSRYRAWRAGVHGSAKFYISDLWKVTFAQYSNVVIFGVPQMMPQLEKKLELELEDGARVIACRFPFPRWTPDHTTGEGIDTVWAYDMSAQRGRGGRPNQEWVGQKNLSETAGLQASSSETRSKLLDVE.

Position 1 is an N-acetylmethionine (Met-1). A compositionally biased stretch (basic and acidic residues) spans Met-1 to Gln-12. Residues Met-1–Ser-25 are disordered. A helical membrane pass occupies residues Leu-34–Ile-54. The tract at residues Thr-51 to Gly-85 is required for mitochondrial location. The disordered stretch occupies residues Gln-209 to Glu-247. A compositionally biased stretch (polar residues) spans Lys-224 to Glu-238.

The protein belongs to the ANT/ATPSC lysine N-methyltransferase family. Ubiquitously expressed.

The protein resides in the mitochondrion membrane. It catalyses the reaction L-lysyl-[protein] + 3 S-adenosyl-L-methionine = N(6),N(6),N(6)-trimethyl-L-lysyl-[protein] + 3 S-adenosyl-L-homocysteine + 3 H(+). Its function is as follows. Mitochondrial protein-lysine N-methyltransferase that trimethylates ATP synthase subunit C, ATP5MC1 and ATP5MC2. Trimethylation is required for proper incorporation of the C subunit into the ATP synthase complex and mitochondrial respiration. Promotes chronic pain. Involved in persistent inflammatory and neuropathic pain: methyltransferase activity in the mitochondria of sensory neurons promotes chronic pain via a pathway that depends on the production of reactive oxygen species (ROS) and on the engagement of spinal cord microglia. This is ATP synthase subunit C lysine N-methyltransferase from Mus musculus (Mouse).